Here is a 109-residue protein sequence, read N- to C-terminus: Nucleoid-associated protein BCB4264_A0025 (109 aa).

This sequence belongs to the YbaB/EbfC family. In terms of assembly, homodimer.

The protein localises to the cytoplasm. Its subcellular location is the nucleoid. Its function is as follows. Binds to DNA and alters its conformation. May be involved in regulation of gene expression, nucleoid organization and DNA protection. The sequence is that of Nucleoid-associated protein BCB4264_A0025 from Bacillus cereus (strain B4264).